Reading from the N-terminus, the 472-residue chain is MNAVTDLKQDYIVADIGLAGWGRKEIAIAETEMPGLMAIRDEFAAAQPLKGARIAGSLHMTIQTAVLIETLKALGADVRWASCNIFSTQDHAAAAIAASGTPVFAFKGESLKEYWDFTHRIFDWADGGTPNMILDDGGDATLLLHLGARAEKDASLIAKPTSEEETFLFAAIKEKLAKDSTWYSRNLAAIRGVTEETTTGVHRLYQMAQKGELKFPAINVNDSVTKSKFDNLYGCRESLVDGIKRATDVMIAGKIAVVAGYGDVGKGSAQALRALSAQVWVTEIDPICALQAAMEGYRVVTMDYAAEHGDIFVTCTGNYHVITHDHMAKMKDQAIVCNIGHFDNEIDIASVEKYEWDEIKPQVDHVKFPDGKKIIILAKGRLVNLGCATGHPSYVMSSSFANQTIAQIELWAERDSGKYPVGVYVLPKHLDEKVARLQLRKLNAQLTELTEQQAAYIGVKKEGPYKADHYRY.

Residues T61, D136, and E196 each contribute to the substrate site. NAD(+) is bound at residue 197–199 (TTT). 2 residues coordinate substrate: K226 and D230. Residues N231, 260-265 (GYGDVG), E283, N318, 339-341 (IGH), and N384 each bind NAD(+).

The protein belongs to the adenosylhomocysteinase family. The cofactor is NAD(+).

Its subcellular location is the cytoplasm. It catalyses the reaction S-adenosyl-L-homocysteine + H2O = L-homocysteine + adenosine. It participates in amino-acid biosynthesis; L-homocysteine biosynthesis; L-homocysteine from S-adenosyl-L-homocysteine: step 1/1. In terms of biological role, may play a key role in the regulation of the intracellular concentration of adenosylhomocysteine. This is Adenosylhomocysteinase from Cupriavidus metallidurans (strain ATCC 43123 / DSM 2839 / NBRC 102507 / CH34) (Ralstonia metallidurans).